The chain runs to 276 residues: 2-dehydro-3-deoxyphosphooctonate aldolase (276 aa).

This sequence belongs to the KdsA family.

The protein resides in the cytoplasm. The enzyme catalyses D-arabinose 5-phosphate + phosphoenolpyruvate + H2O = 3-deoxy-alpha-D-manno-2-octulosonate-8-phosphate + phosphate. The protein operates within carbohydrate biosynthesis; 3-deoxy-D-manno-octulosonate biosynthesis; 3-deoxy-D-manno-octulosonate from D-ribulose 5-phosphate: step 2/3. In Stenotrophomonas maltophilia (strain K279a), this protein is 2-dehydro-3-deoxyphosphooctonate aldolase.